We begin with the raw amino-acid sequence, 138 residues long: MRTLWIVAVLLLGVEGSLVQFETLIMKVAKRSGLLWYSAYGCYCGWGGHGRPQDATDRCCFVHDCCYGKATDCNPKTVSYTYSEENGEIVCGGDDPCGTQICECDKAAAICFRDNIPSYDNKYWLFPPKNCREEPEPC.

The first 16 residues, 1–16 (MRTLWIVAVLLLGVEG), serve as a signal peptide directing secretion. 7 cysteine pairs are disulfide-bonded: C42–C131, C44–C60, C59–C111, C65–C138, C66–C104, C73–C97, and C91–C102. Y43, G45, and G47 together coordinate Ca(2+). The active site involves H63. D64 lines the Ca(2+) pocket. D105 is an active-site residue.

This sequence belongs to the phospholipase A2 family. Group II subfamily. D49 sub-subfamily. Dimer. The cofactor is Ca(2+). In terms of tissue distribution, expressed by the venom gland.

The protein resides in the secreted. It catalyses the reaction a 1,2-diacyl-sn-glycero-3-phosphocholine + H2O = a 1-acyl-sn-glycero-3-phosphocholine + a fatty acid + H(+). Its function is as follows. PLA2 catalyzes the calcium-dependent hydrolysis of the 2-acyl groups in 3-sn-phosphoglycerides. This chain is Acidic phospholipase A2 beta, found in Crotalus adamanteus (Eastern diamondback rattlesnake).